Reading from the N-terminus, the 291-residue chain is N-acetylmannosamine kinase (291 aa).

ATP is bound by residues 5–12 (AIDIGGTK) and 132–139 (GVGGGVVS). Positions 156, 166, 168, and 173 each coordinate Zn(2+).

Belongs to the ROK (NagC/XylR) family. NanK subfamily. Homodimer.

The enzyme catalyses an N-acyl-D-mannosamine + ATP = an N-acyl-D-mannosamine 6-phosphate + ADP + H(+). The protein operates within amino-sugar metabolism; N-acetylneuraminate degradation; D-fructose 6-phosphate from N-acetylneuraminate: step 2/5. Catalyzes the phosphorylation of N-acetylmannosamine (ManNAc) to ManNAc-6-P. This Escherichia coli (strain 55989 / EAEC) protein is N-acetylmannosamine kinase.